A 196-amino-acid polypeptide reads, in one-letter code: Imidazole glycerol phosphate synthase subunit HisH (196 aa).

In terms of domain architecture, Glutamine amidotransferase type-1 spans 2–196 (KVAVVKYNAG…ERVLRNFLDL (195 aa)). Cysteine 77 serves as the catalytic Nucleophile. Residues histidine 178 and glutamate 180 contribute to the active site.

In terms of assembly, heterodimer of HisH and HisF.

The protein localises to the cytoplasm. It carries out the reaction 5-[(5-phospho-1-deoxy-D-ribulos-1-ylimino)methylamino]-1-(5-phospho-beta-D-ribosyl)imidazole-4-carboxamide + L-glutamine = D-erythro-1-(imidazol-4-yl)glycerol 3-phosphate + 5-amino-1-(5-phospho-beta-D-ribosyl)imidazole-4-carboxamide + L-glutamate + H(+). The catalysed reaction is L-glutamine + H2O = L-glutamate + NH4(+). The protein operates within amino-acid biosynthesis; L-histidine biosynthesis; L-histidine from 5-phospho-alpha-D-ribose 1-diphosphate: step 5/9. Functionally, IGPS catalyzes the conversion of PRFAR and glutamine to IGP, AICAR and glutamate. The HisH subunit catalyzes the hydrolysis of glutamine to glutamate and ammonia as part of the synthesis of IGP and AICAR. The resulting ammonia molecule is channeled to the active site of HisF. This is Imidazole glycerol phosphate synthase subunit HisH from Bacteroides thetaiotaomicron (strain ATCC 29148 / DSM 2079 / JCM 5827 / CCUG 10774 / NCTC 10582 / VPI-5482 / E50).